Consider the following 638-residue polypeptide: DNA gyrase subunit B (638 aa).

A Toprim domain is found at 431 to 545; the sequence is RELFIVEGNS…YGFVYIAQPP (115 aa). Mg(2+) is bound by residues E437, D510, and D512.

Belongs to the type II topoisomerase GyrB family. Heterotetramer, composed of two GyrA and two GyrB chains. In the heterotetramer, GyrA contains the active site tyrosine that forms a transient covalent intermediate with DNA, while GyrB binds cofactors and catalyzes ATP hydrolysis. Mg(2+) serves as cofactor. The cofactor is Mn(2+). It depends on Ca(2+) as a cofactor.

The protein localises to the cytoplasm. It carries out the reaction ATP-dependent breakage, passage and rejoining of double-stranded DNA.. Functionally, a type II topoisomerase that negatively supercoils closed circular double-stranded (ds) DNA in an ATP-dependent manner to modulate DNA topology and maintain chromosomes in an underwound state. Negative supercoiling favors strand separation, and DNA replication, transcription, recombination and repair, all of which involve strand separation. Also able to catalyze the interconversion of other topological isomers of dsDNA rings, including catenanes and knotted rings. Type II topoisomerases break and join 2 DNA strands simultaneously in an ATP-dependent manner. The polypeptide is DNA gyrase subunit B (Metamycoplasma arthritidis (Mycoplasma arthritidis)).